Consider the following 209-residue polypeptide: Methylthioribulose-1-phosphate dehydratase (209 aa).

Zn(2+) is bound by residues His98 and His100.

It belongs to the aldolase class II family. MtnB subfamily. In terms of assembly, homotetramer. Zn(2+) is required as a cofactor.

It carries out the reaction 5-(methylsulfanyl)-D-ribulose 1-phosphate = 5-methylsulfanyl-2,3-dioxopentyl phosphate + H2O. Its pathway is amino-acid biosynthesis; L-methionine biosynthesis via salvage pathway; L-methionine from S-methyl-5-thio-alpha-D-ribose 1-phosphate: step 2/6. In terms of biological role, catalyzes the dehydration of methylthioribulose-1-phosphate (MTRu-1-P) into 2,3-diketo-5-methylthiopentyl-1-phosphate (DK-MTP-1-P). In Bacillus subtilis (strain 168), this protein is Methylthioribulose-1-phosphate dehydratase (mtnB).